We begin with the raw amino-acid sequence, 190 residues long: Inosine triphosphate pyrophosphatase (190 aa).

ITP is bound at residue 10-15 (TGNAKK). Glu-40 serves as a coordination point for Mg(2+). Residues Lys-52, 68–69 (DT), Lys-85, 144–147 (FGWD), Lys-167, and 172–173 (HR) contribute to the ITP site.

The protein belongs to the HAM1 NTPase family. In terms of assembly, homodimer. Mg(2+) is required as a cofactor. Requires Mn(2+) as cofactor.

The protein resides in the cytoplasm. The catalysed reaction is ITP + H2O = IMP + diphosphate + H(+). It catalyses the reaction dITP + H2O = dIMP + diphosphate + H(+). It carries out the reaction XTP + H2O = XMP + diphosphate + H(+). Its function is as follows. Pyrophosphatase that hydrolyzes non-canonical purine nucleotides such as inosine triphosphate (ITP), deoxyinosine triphosphate (dITP) or xanthosine 5'-triphosphate (XTP) to their respective monophosphate derivatives. The enzyme does not distinguish between the deoxy- and ribose forms. Probably excludes non-canonical purines from RNA and DNA precursor pools, thus preventing their incorporation into RNA and DNA and avoiding chromosomal lesions. In Culex quinquefasciatus (Southern house mosquito), this protein is Inosine triphosphate pyrophosphatase.